The following is an 831-amino-acid chain: Molybdenum cofactor sulfurase (831 aa).

At lysine 262 the chain carries N6-(pyridoxal phosphate)lysine. The active site involves cysteine 422. Residues 651 to 823 (AWLSEFLGKP…LSIGSHVIPK (173 aa)) enclose the MOSC domain.

It belongs to the class-V pyridoxal-phosphate-dependent aminotransferase family. MOCOS subfamily. Requires pyridoxal 5'-phosphate as cofactor.

The enzyme catalyses Mo-molybdopterin + L-cysteine + AH2 = thio-Mo-molybdopterin + L-alanine + A + H2O. It functions in the pathway cofactor biosynthesis; molybdopterin biosynthesis. Sulfurates the molybdenum cofactor. Sulfation of molybdenum is essential for xanthine dehydrogenase (XDH) and aldehyde oxidase (ADO) enzymes in which molybdenum cofactor is liganded by 1 oxygen and 1 sulfur atom in active form. In Danio rerio (Zebrafish), this protein is Molybdenum cofactor sulfurase (mocos).